Consider the following 270-residue polypeptide: Acyl-[acyl-carrier-protein]--UDP-N-acetylglucosamine O-acyltransferase (270 aa).

This sequence belongs to the transferase hexapeptide repeat family. LpxA subfamily. In terms of assembly, homotrimer.

The protein resides in the cytoplasm. It carries out the reaction a (3R)-hydroxyacyl-[ACP] + UDP-N-acetyl-alpha-D-glucosamine = a UDP-3-O-[(3R)-3-hydroxyacyl]-N-acetyl-alpha-D-glucosamine + holo-[ACP]. Its pathway is glycolipid biosynthesis; lipid IV(A) biosynthesis; lipid IV(A) from (3R)-3-hydroxytetradecanoyl-[acyl-carrier-protein] and UDP-N-acetyl-alpha-D-glucosamine: step 1/6. In terms of biological role, involved in the biosynthesis of lipid A, a phosphorylated glycolipid that anchors the lipopolysaccharide to the outer membrane of the cell. The chain is Acyl-[acyl-carrier-protein]--UDP-N-acetylglucosamine O-acyltransferase from Sinorhizobium fredii (strain NBRC 101917 / NGR234).